The following is a 96-amino-acid chain: Co-chaperonin GroES (96 aa).

The protein belongs to the GroES chaperonin family. As to quaternary structure, heptamer of 7 subunits arranged in a ring. Interacts with the chaperonin GroEL.

Its subcellular location is the cytoplasm. Its function is as follows. Together with the chaperonin GroEL, plays an essential role in assisting protein folding. The GroEL-GroES system forms a nano-cage that allows encapsulation of the non-native substrate proteins and provides a physical environment optimized to promote and accelerate protein folding. GroES binds to the apical surface of the GroEL ring, thereby capping the opening of the GroEL channel. This Shewanella sediminis (strain HAW-EB3) protein is Co-chaperonin GroES.